Consider the following 306-residue polypeptide: 4-hydroxy-3-methylbut-2-enyl diphosphate reductase (306 aa).

Position 12 (cysteine 12) interacts with [4Fe-4S] cluster. Histidine 41 and histidine 74 together coordinate (2E)-4-hydroxy-3-methylbut-2-enyl diphosphate. Histidine 41 and histidine 74 together coordinate dimethylallyl diphosphate. The isopentenyl diphosphate site is built by histidine 41 and histidine 74. Cysteine 96 lines the [4Fe-4S] cluster pocket. Residue histidine 124 coordinates (2E)-4-hydroxy-3-methylbut-2-enyl diphosphate. Residue histidine 124 participates in dimethylallyl diphosphate binding. An isopentenyl diphosphate-binding site is contributed by histidine 124. Residue glutamate 126 is the Proton donor of the active site. A (2E)-4-hydroxy-3-methylbut-2-enyl diphosphate-binding site is contributed by threonine 164. Cysteine 194 serves as a coordination point for [4Fe-4S] cluster. Residues serine 222, serine 223, asparagine 224, and serine 266 each coordinate (2E)-4-hydroxy-3-methylbut-2-enyl diphosphate. Dimethylallyl diphosphate is bound by residues serine 222, serine 223, asparagine 224, and serine 266. Positions 222, 223, 224, and 266 each coordinate isopentenyl diphosphate.

Belongs to the IspH family. The cofactor is [4Fe-4S] cluster.

It carries out the reaction isopentenyl diphosphate + 2 oxidized [2Fe-2S]-[ferredoxin] + H2O = (2E)-4-hydroxy-3-methylbut-2-enyl diphosphate + 2 reduced [2Fe-2S]-[ferredoxin] + 2 H(+). The catalysed reaction is dimethylallyl diphosphate + 2 oxidized [2Fe-2S]-[ferredoxin] + H2O = (2E)-4-hydroxy-3-methylbut-2-enyl diphosphate + 2 reduced [2Fe-2S]-[ferredoxin] + 2 H(+). It participates in isoprenoid biosynthesis; dimethylallyl diphosphate biosynthesis; dimethylallyl diphosphate from (2E)-4-hydroxy-3-methylbutenyl diphosphate: step 1/1. Its pathway is isoprenoid biosynthesis; isopentenyl diphosphate biosynthesis via DXP pathway; isopentenyl diphosphate from 1-deoxy-D-xylulose 5-phosphate: step 6/6. Its function is as follows. Catalyzes the conversion of 1-hydroxy-2-methyl-2-(E)-butenyl 4-diphosphate (HMBPP) into a mixture of isopentenyl diphosphate (IPP) and dimethylallyl diphosphate (DMAPP). Acts in the terminal step of the DOXP/MEP pathway for isoprenoid precursor biosynthesis. The protein is 4-hydroxy-3-methylbut-2-enyl diphosphate reductase of Ruthia magnifica subsp. Calyptogena magnifica.